The sequence spans 59 residues: Large ribosomal subunit protein bL32 (59 aa).

Positions M1–D59 are disordered. A compositionally biased stretch (basic residues) spans R49–D59.

The protein belongs to the bacterial ribosomal protein bL32 family.

The chain is Large ribosomal subunit protein bL32 from Alkalilimnicola ehrlichii (strain ATCC BAA-1101 / DSM 17681 / MLHE-1).